The following is a 192-amino-acid chain: SRP-independent targeting protein 2 homolog (192 aa).

A run of 2 helical transmembrane segments spans residues 16–36 (ILTF…ILRF) and 102–122 (WILI…YLLV). Residues 149-192 (LNQPPQQQQQQQQQQHQQHATPSEPVLSKRQQKLRKKAAKYSRP) form a disordered region. Low complexity predominate over residues 151 to 167 (QPPQQQQQQQQQQHQQH). The span at 178 to 192 (RQQKLRKKAAKYSRP) shows a compositional bias: basic residues.

It belongs to the TMEM208 family.

It is found in the endoplasmic reticulum membrane. Its function is as follows. May function in a SRP (signal recognition particle) and GET (guided entry of tail-anchored proteins) independent pathway for targeting a broad range of substrate proteins to the endoplasmic reticulum. Has a role in meiosis. The sequence is that of SRP-independent targeting protein 2 homolog from Schizosaccharomyces pombe (strain 972 / ATCC 24843) (Fission yeast).